A 342-amino-acid chain; its full sequence is Anthranilate phosphoribosyltransferase (342 aa).

5-phospho-alpha-D-ribose 1-diphosphate-binding positions include Gly79, 82 to 83 (GD), Thr87, 89 to 92 (NVST), 107 to 115 (KHGNRSVSS), and Ser119. Gly79 is a binding site for anthranilate. A Mg(2+)-binding site is contributed by Ser91. Asn110 is a binding site for anthranilate. Arg165 lines the anthranilate pocket. Mg(2+) is bound by residues Asp223 and Glu224.

Belongs to the anthranilate phosphoribosyltransferase family. Homodimer. It depends on Mg(2+) as a cofactor.

It carries out the reaction N-(5-phospho-beta-D-ribosyl)anthranilate + diphosphate = 5-phospho-alpha-D-ribose 1-diphosphate + anthranilate. The protein operates within amino-acid biosynthesis; L-tryptophan biosynthesis; L-tryptophan from chorismate: step 2/5. In terms of biological role, catalyzes the transfer of the phosphoribosyl group of 5-phosphorylribose-1-pyrophosphate (PRPP) to anthranilate to yield N-(5'-phosphoribosyl)-anthranilate (PRA). In Aeromonas hydrophila subsp. hydrophila (strain ATCC 7966 / DSM 30187 / BCRC 13018 / CCUG 14551 / JCM 1027 / KCTC 2358 / NCIMB 9240 / NCTC 8049), this protein is Anthranilate phosphoribosyltransferase.